A 550-amino-acid polypeptide reads, in one-letter code: Arginine--tRNA ligase (550 aa).

The 'HIGH' region motif lies at 130 to 140 (ANPTGPIHLGG).

The protein belongs to the class-I aminoacyl-tRNA synthetase family. As to quaternary structure, monomer.

The protein localises to the cytoplasm. It carries out the reaction tRNA(Arg) + L-arginine + ATP = L-arginyl-tRNA(Arg) + AMP + diphosphate. This Corynebacterium glutamicum (strain ATCC 13032 / DSM 20300 / JCM 1318 / BCRC 11384 / CCUG 27702 / LMG 3730 / NBRC 12168 / NCIMB 10025 / NRRL B-2784 / 534) protein is Arginine--tRNA ligase (argS).